We begin with the raw amino-acid sequence, 140 residues long: Large-conductance mechanosensitive channel (140 aa).

2 consecutive transmembrane segments (helical) span residues 21–41 and 82–102; these read VGVIIGGAFGKIVESLVGDVI and GSFITVAINFMILAFIIFMMI.

This sequence belongs to the MscL family. In terms of assembly, homopentamer.

Its subcellular location is the cell inner membrane. Channel that opens in response to stretch forces in the membrane lipid bilayer. May participate in the regulation of osmotic pressure changes within the cell. The polypeptide is Large-conductance mechanosensitive channel (Leptothrix cholodnii (strain ATCC 51168 / LMG 8142 / SP-6) (Leptothrix discophora (strain SP-6))).